The chain runs to 486 residues: Homoserine O-acetyltransferase (486 aa).

In terms of domain architecture, AB hydrolase-1 spans 66–436 (NVLVICHALT…PEGHDAFLLE (371 aa)). Ser162 (nucleophile) is an active-site residue. Residues 248–281 (KFSRRSPSIAQQQKAQREETRKPSTVSEHSLQIH) are disordered. Composition is skewed to polar residues over residues 250–261 (SRRSPSIAQQQK) and 270–280 (PSTVSEHSLQI). Active-site residues include Asp401 and His430.

It belongs to the AB hydrolase superfamily. MetX family.

It is found in the cytoplasm. It carries out the reaction L-homoserine + acetyl-CoA = O-acetyl-L-homoserine + CoA. It functions in the pathway amino-acid biosynthesis; L-methionine biosynthesis via de novo pathway; O-acetyl-L-homoserine from L-homoserine: step 1/1. Its function is as follows. Commits homoserine to the methionine biosynthesis pathway by catalyzing its O-acetylation. This is Homoserine O-acetyltransferase (MET2) from Saccharomyces cerevisiae (strain ATCC 204508 / S288c) (Baker's yeast).